Consider the following 205-residue polypeptide: Large ribosomal subunit protein eL15 (205 aa).

2 disordered regions span residues 70-90 and 172-197; these read GRKR…HGVN and RGLR…KRRN.

The protein belongs to the eukaryotic ribosomal protein eL15 family.

This Dictyostelium discoideum (Social amoeba) protein is Large ribosomal subunit protein eL15 (rpl15-1).